An 838-amino-acid chain; its full sequence is Urease (838 aa).

Positions 402–838 (GGFDTHIHFI…LPLTQDYFVY (437 aa)) constitute a Urease domain. Ni(2+) contacts are provided by His-407, His-409, and Lys-490. At Lys-490 the chain carries N6-carboxylysine. His-492 contributes to the substrate binding site. Residues His-519 and His-545 each coordinate Ni(2+). His-593 serves as the catalytic Proton donor. Asp-633 serves as a coordination point for Ni(2+).

This sequence in the C-terminal section; belongs to the metallo-dependent hydrolases superfamily. Urease alpha subunit family. Homohexamer. Requires Ni cation as cofactor. In terms of processing, carboxylation allows a single lysine to coordinate two nickel ions.

The enzyme catalyses urea + 2 H2O + H(+) = hydrogencarbonate + 2 NH4(+). Its pathway is nitrogen metabolism; urea degradation; CO(2) and NH(3) from urea (urease route): step 1/1. The polypeptide is Urease (ure1) (Aspergillus fumigatus (strain ATCC MYA-4609 / CBS 101355 / FGSC A1100 / Af293) (Neosartorya fumigata)).